We begin with the raw amino-acid sequence, 23 residues long: Conotoxin as25a (23 aa).

4-hydroxyproline; partial is present on Pro-4. Pro-23 carries the 4-hydroxyproline; partial; alternate modification. Position 23 is a proline amide; alternate (Pro-23).

Post-translationally, the name as25b given in PubMed:23474143 corresponds to the hydroxylated peptide. The amidation of the C-terminus of this hydroxylated peptide is not directly confirmed. In terms of processing, contains 3 disulfide bonds. Expressed by the venom duct.

Its subcellular location is the secreted. Upon intracranial injection in mice, as25a (the toxin without the two 4-hydroxyprolines) provokes paralysis of the hind limbs and death with a dose of 240 pmol. This is Conotoxin as25a from Conus cancellatus (Cancellate cone).